The sequence spans 381 residues: uncharacterized protein (381 aa).

A disordered region spans residues histidine 176 to asparagine 292. A compositionally biased stretch (basic residues) spans alanine 177–asparagine 186. A compositionally biased stretch (basic and acidic residues) spans glutamine 187–glutamate 212. Residues aspartate 276–valine 286 show a composition bias toward acidic residues.

This is an uncharacterized protein from Caenorhabditis elegans.